A 104-amino-acid polypeptide reads, in one-letter code: Replication restart protein PriB (104 aa).

Residues 1 to 101 form the SSB domain; that stretch reads MTNRLELSGV…LHADHIEIIC (101 aa).

This sequence belongs to the PriB family. As to quaternary structure, homodimer. Interacts with PriA and DnaT. Component of the replication restart primosome. Primosome assembly occurs via a 'hand-off' mechanism. PriA binds to replication forks, subsequently PriB then DnaT bind; DnaT then displaces ssDNA to generate the helicase loading substrate.

Involved in the restart of stalled replication forks, which reloads the replicative helicase on sites other than the origin of replication; the PriA-PriB pathway is the major replication restart pathway. During primosome assembly it facilitates complex formation between PriA and DnaT on DNA; stabilizes PriA on DNA. Stimulates the DNA unwinding activity of PriA helicase. In Photobacterium profundum (strain SS9), this protein is Replication restart protein PriB.